The following is a 240-amino-acid chain: Uridylate kinase (240 aa).

13–16 (KFSG) serves as a coordination point for ATP. Gly55 provides a ligand contact to UMP. 2 residues coordinate ATP: Gly56 and Arg60. Residues Asp76 and 137–144 (TGNPFFTT) contribute to the UMP site. 3 residues coordinate ATP: Thr164, Tyr170, and Asp173.

The protein belongs to the UMP kinase family. In terms of assembly, homohexamer.

It localises to the cytoplasm. The enzyme catalyses UMP + ATP = UDP + ADP. Its pathway is pyrimidine metabolism; CTP biosynthesis via de novo pathway; UDP from UMP (UMPK route): step 1/1. With respect to regulation, inhibited by UTP. Its function is as follows. Catalyzes the reversible phosphorylation of UMP to UDP. This Helicobacter pylori (strain J99 / ATCC 700824) (Campylobacter pylori J99) protein is Uridylate kinase.